The chain runs to 688 residues: Potassium-transporting ATPase ATP-binding subunit (688 aa).

A run of 4 helical transmembrane segments spans residues 37–57 (FIVY…LFGI), 65–85 (ILFI…AEAI), 219–239 (IALQ…TASL), and 262–282 (LALL…AIGI). Aspartate 313 functions as the 4-aspartylphosphate intermediate in the catalytic mechanism. Residues aspartate 350, glutamate 354, 383–390 (FTAKTRMS), and lysine 401 contribute to the ATP site. Residues aspartate 524 and aspartate 528 each coordinate Mg(2+). 3 helical membrane passes run 586–606 (IAND…GLFP), 622–642 (AILS…PLAL), and 668–688 (IIAP…LGIV).

It belongs to the cation transport ATPase (P-type) (TC 3.A.3) family. Type IA subfamily. As to quaternary structure, the system is composed of three essential subunits: KdpA, KdpB and KdpC.

Its subcellular location is the cell membrane. It catalyses the reaction K(+)(out) + ATP + H2O = K(+)(in) + ADP + phosphate + H(+). Part of the high-affinity ATP-driven potassium transport (or Kdp) system, which catalyzes the hydrolysis of ATP coupled with the electrogenic transport of potassium into the cytoplasm. This subunit is responsible for energy coupling to the transport system and for the release of the potassium ions to the cytoplasm. The chain is Potassium-transporting ATPase ATP-binding subunit from Clostridium perfringens (strain ATCC 13124 / DSM 756 / JCM 1290 / NCIMB 6125 / NCTC 8237 / Type A).